A 139-amino-acid polypeptide reads, in one-letter code: Hydrogenase maturation factor HypA (139 aa).

Histidine 2 contributes to the Ni(2+) binding site. Residues cysteine 73, cysteine 76, cysteine 110, and cysteine 113 each contribute to the Zn(2+) site.

The protein belongs to the HypA/HybF family.

Its function is as follows. Involved in the maturation of [NiFe] hydrogenases. Required for nickel insertion into the metal center of the hydrogenase. The protein is Hydrogenase maturation factor HypA of Pyrococcus furiosus (strain ATCC 43587 / DSM 3638 / JCM 8422 / Vc1).